Consider the following 20-residue polypeptide: AVPDKIDPRESGYVTGVKDQ.

Residues 1-10 are compositionally biased toward basic and acidic residues; it reads AVPDKIDPRE. The segment at 1-20 is disordered; it reads AVPDKIDPRESGYVTGVKDQ.

This sequence belongs to the peptidase C1 family. Dimer of a heavy and a light chain linked by disulfide bonds.

The protein resides in the lysosome. It catalyses the reaction Specificity close to that of papain. As compared to cathepsin B, cathepsin L exhibits higher activity toward protein substrates, but has little activity on Z-Arg-Arg-NHMec, and no peptidyl-dipeptidase activity.. Functionally, thiol protease that assists the parasite in burrowing through the gut wall and liver of its mammalian host. This Fasciola hepatica (Liver fluke) protein is Cathepsin L1.